The chain runs to 255 residues: Acetylglutamate kinase (255 aa).

Residues Gly40–Gly41, Arg62, and Asn153 contribute to the substrate site.

It belongs to the acetylglutamate kinase family. ArgB subfamily.

Its subcellular location is the cytoplasm. It catalyses the reaction N-acetyl-L-glutamate + ATP = N-acetyl-L-glutamyl 5-phosphate + ADP. It functions in the pathway amino-acid biosynthesis; L-arginine biosynthesis; N(2)-acetyl-L-ornithine from L-glutamate: step 2/4. In terms of biological role, catalyzes the ATP-dependent phosphorylation of N-acetyl-L-glutamate. In Bacillus thuringiensis subsp. konkukian (strain 97-27), this protein is Acetylglutamate kinase.